The following is a 359-amino-acid chain: Fructose-bisphosphate aldolase 1 (359 aa).

D-glyceraldehyde 3-phosphate is bound at residue S50. D83 acts as the Proton donor in catalysis. Zn(2+) is bound by residues H84, D105, E142, and H198. G199 lines the dihydroxyacetone phosphate pocket. H232 lines the Zn(2+) pocket. Dihydroxyacetone phosphate-binding positions include G233–S235 and N275–T278.

This sequence belongs to the class II fructose-bisphosphate aldolase family. In terms of assembly, homodimer. Requires Zn(2+) as cofactor.

It carries out the reaction beta-D-fructose 1,6-bisphosphate = D-glyceraldehyde 3-phosphate + dihydroxyacetone phosphate. Its pathway is carbohydrate biosynthesis; Calvin cycle. It functions in the pathway carbohydrate degradation; glycolysis; D-glyceraldehyde 3-phosphate and glycerone phosphate from D-glucose: step 4/4. Functionally, catalyzes the aldol condensation of dihydroxyacetone phosphate (DHAP or glycerone-phosphate) with glyceraldehyde 3-phosphate (G3P) to form fructose 1,6-bisphosphate (FBP) in gluconeogenesis and the reverse reaction in glycolysis. The protein is Fructose-bisphosphate aldolase 1 (cfxA) of Cereibacter sphaeroides (Rhodobacter sphaeroides).